The sequence spans 306 residues: Oligopeptide transport system permease protein OppB (306 aa).

Over methionine 1–arginine 8 the chain is Cytoplasmic. Residues leucine 9–leucine 29 form a helical membrane-spanning segment. Residues alanine 30–lysine 99 lie on the Periplasmic side of the membrane. In terms of domain architecture, ABC transmembrane type-1 spans phenylalanine 94 to valine 293. The helical transmembrane segment at leucine 100 to alanine 120 threads the bilayer. At leucine 121–serine 135 the chain is on the cytoplasmic side. Residues methionine 136–isoleucine 156 form a helical membrane-spanning segment. Topologically, residues tyrosine 157–glycine 169 are periplasmic. The helical transmembrane segment at threonine 170–alanine 190 threads the bilayer. Residues arginine 191–leucine 229 are Cytoplasmic-facing. Residues leucine 230–isoleucine 250 form a helical membrane-spanning segment. Residues glutamate 251 to threonine 279 lie on the Periplasmic side of the membrane. The chain crosses the membrane as a helical span at residues isoleucine 280–isoleucine 300. The Cytoplasmic segment spans residues aspartate 301–tyrosine 306.

The protein belongs to the binding-protein-dependent transport system permease family. OppBC subfamily. As to quaternary structure, the complex is composed of two ATP-binding proteins (OppD and OppF), two transmembrane proteins (OppB and OppC) and a solute-binding protein (OppA).

The protein resides in the cell inner membrane. Part of the ABC transporter complex OppABCDF involved in the uptake of oligopeptides. Probably responsible for the translocation of the substrate across the membrane. This is Oligopeptide transport system permease protein OppB (oppB) from Haemophilus influenzae (strain ATCC 51907 / DSM 11121 / KW20 / Rd).